The sequence spans 103 residues: MANSKRLFGVVRRKLLRRSQSRITIIRSSAPETTREEIAAVKIQAFFRGHLARRAFKALKSLVKLQAVARGVLVRRQARIALHCMHALARLQVRVRARQLLSH.

The calmodulin-binding stretch occupies residues 10 to 22 (VVRRKLLRRSQSR). IQ domains lie at 36 to 62 (EEIA…LKSL) and 63 to 87 (VKLQ…CMHA).

Belongs to the IQD family. In terms of assembly, interacts with calmodulin (CaM and CML) at the plasma membrane in a calcium ion Ca(2+)- independent manner, however, Ca(2+) seems to modulate calmodulin binding. Binds to multiple calmodulin (CaM) in the presence of Ca(2+) and CaM-like proteins.

Its subcellular location is the nucleus. The protein resides in the nucleolus. The protein localises to the cell membrane. Its function is as follows. May be involved in cooperative interactions with calmodulins or calmodulin-like proteins. Recruits calmodulin proteins to microtubules, thus being a potential scaffold in cellular signaling and trafficking. May associate with nucleic acids and regulate gene expression at the transcriptional or post-transcriptional level. The sequence is that of Protein IQ-DOMAIN 20 from Arabidopsis thaliana (Mouse-ear cress).